Consider the following 155-residue polypeptide: NADPH-dependent 7-cyano-7-deazaguanine reductase (155 aa).

Cys-53 functions as the Thioimide intermediate in the catalytic mechanism. The active-site Proton donor is Asp-60. Substrate is bound by residues 75-77 (VES) and 94-95 (HE).

The protein belongs to the GTP cyclohydrolase I family. QueF type 1 subfamily.

Its subcellular location is the cytoplasm. The catalysed reaction is 7-aminomethyl-7-carbaguanine + 2 NADP(+) = 7-cyano-7-deazaguanine + 2 NADPH + 3 H(+). It functions in the pathway tRNA modification; tRNA-queuosine biosynthesis. In terms of biological role, catalyzes the NADPH-dependent reduction of 7-cyano-7-deazaguanine (preQ0) to 7-aminomethyl-7-deazaguanine (preQ1). The polypeptide is NADPH-dependent 7-cyano-7-deazaguanine reductase (Hyphomonas neptunium (strain ATCC 15444)).